A 143-amino-acid polypeptide reads, in one-letter code: UPF0225 protein Reut_A0143 (143 aa).

This sequence belongs to the UPF0225 family.

This Cupriavidus pinatubonensis (strain JMP 134 / LMG 1197) (Cupriavidus necator (strain JMP 134)) protein is UPF0225 protein Reut_A0143.